A 138-amino-acid polypeptide reads, in one-letter code: MPRILSIDYGQKRTGIAVTDEMQIIASGLTTIPTHTLIDFLKDYFAKEKVEAVLIGEPKQMNGQPSESASVINGFVTHFSNIFPDMKVIRVDERFTSKMAFQTMLDSGLSKKQRQNKGLIDEISATIMLQDYLSSKRF.

It belongs to the YqgF nuclease family.

Its subcellular location is the cytoplasm. Functionally, could be a nuclease involved in processing of the 5'-end of pre-16S rRNA. The protein is Putative pre-16S rRNA nuclease of Flavobacterium johnsoniae (strain ATCC 17061 / DSM 2064 / JCM 8514 / BCRC 14874 / CCUG 350202 / NBRC 14942 / NCIMB 11054 / UW101) (Cytophaga johnsonae).